A 703-amino-acid polypeptide reads, in one-letter code: METETEHDRTVSVDDNDSLVPEPSSTKESFFEDLSLTGQVMNPQLSSAGEVLTKVELDFAFVSEKLVNLSLLTMQLGTRENDFESFVSKKEEDEEEPSSNVDDDDDSAEKALEFDLLSSILNSEVKELESLLGFLQNEIQSARVMISPFQHDGEAFLDLEGKLNDTEQSLGQLMEQVVEMKKQSSNFQRLSSGLDEQGSWSGGQTSVSQNDGEFGDLSAKINMQTADQQRNVLRMLEKSLAKEMELEKKLSESRNTERELEMKLYSSEQDVVYMEEVTEDAFSRWLEADNAAEVFKGTSKEMSGKLQILQFNLSGSFKREDNLKSKLVDSKERLEAKECALHKLDSSNARLADFLVAQTEGLKESLQEAEEKLILLNTENSTLSEKVSSLEEQLNEYGIQTEDADATSGALITDLERINEELKDKLAKTEARAEETESKCKILEESKKELQDELGNFRDKGFTIHKLASLEKHLRDSDLQLEHAVAAVEASKEKQNLLYSTVSDMEDVIEDLKSKVLKAENRADITEEKLIMVSESNAEVNEELKFFKGRLKEGEKYLQQAEERKLRTAKDIGVHNKIMKKLVMQLAAERERLHKQITNLSRENCVLMVKLKKVGKTGYMESGNGSEVSPKSDQNASSCHQGSRLQATFISLTNPEEEETGSKSDIGSVRRLDVGALRFKHILVAILVILISSIAYVISQQNM.

Over residues 1 to 12 (METETEHDRTVS) the composition is skewed to basic and acidic residues. Disordered regions lie at residues 1 to 27 (METE…SSTK) and 86 to 107 (FVSK…DDDS). The segment covering 92–107 (EDEEEPSSNVDDDDDS) has biased composition (acidic residues). The stretch at 118–183 (SSILNSEVKE…MEQVVEMKKQ (66 aa)) forms a coiled coil. The interval 189–208 (RLSSGLDEQGSWSGGQTSVS) is disordered. The span at 198 to 208 (GSWSGGQTSVS) shows a compositional bias: polar residues. Coiled-coil stretches lie at residues 236–265 (LEKS…MKLY), 318–461 (KRED…RDKG), and 500–604 (STVS…SREN). A helical transmembrane segment spans residues 679–699 (FKHILVAILVILISSIAYVIS).

As to quaternary structure, homodimer. Component of Ran complexes at least composed of WIT1 or WIT2, RANGAP1 or RANGAP2, and WIP1 or WIP2 or WIP3. Interacts with WIP2, WPP1/MAF1, WPP2/MAF2, RANGAP1 and RANGAP2. Component of a ternary complex composed of WPP1, HSP70-1 and WIT1. Interacts with KAKU1. Interacts with WIP1. As to expression, ubiquitous.

The protein localises to the nucleus envelope. It localises to the nucleus membrane. Functionally, together with WIT2, required for the nuclear envelope docking of RANGAP proteins in root tips. The polypeptide is WPP domain-interacting tail-anchored protein 1 (WIT1) (Arabidopsis thaliana (Mouse-ear cress)).